The primary structure comprises 297 residues: MNADLTVVSPQIQAQILAEALPYIRKFHGKTIVVKYGGNAMTEERLKHGFARDVILLKLVGMNPVVVHGGGPQIDNALKKIGKQGTFVQGMRITDEETMEVVEWVLGGEVQQDIVMLINHYGGQAVGLTGKDGGLIRAKKMQMPDKEHPGQFLDIGFVGDIEAINPAVVKALQDDAFIPIISPIGFGDDGQAYNINADVVAGKIAEILKAEKLIMMTNIAGVQDKQGNLLTDLSAREIDEMFEDGTISGGMLPKISSALDAAKSGVNTVHIIDGRIEHSLLLEVLTEQAFGTMIRSH.

Residues 70–71 (GG), Arg-92, and Asn-194 contribute to the substrate site.

Belongs to the acetylglutamate kinase family. ArgB subfamily.

It is found in the cytoplasm. It catalyses the reaction N-acetyl-L-glutamate + ATP = N-acetyl-L-glutamyl 5-phosphate + ADP. Its pathway is amino-acid biosynthesis; L-arginine biosynthesis; N(2)-acetyl-L-ornithine from L-glutamate: step 2/4. Functionally, catalyzes the ATP-dependent phosphorylation of N-acetyl-L-glutamate. The sequence is that of Acetylglutamate kinase from Janthinobacterium sp. (strain Marseille) (Minibacterium massiliensis).